The following is a 156-amino-acid chain: Large ribosomal subunit protein bL9 (156 aa).

The protein belongs to the bacterial ribosomal protein bL9 family.

In terms of biological role, binds to the 23S rRNA. This chain is Large ribosomal subunit protein bL9, found in Treponema pallidum (strain Nichols).